The sequence spans 381 residues: Stearoyl-[acyl-carrier-protein] 9-desaturase 1, chloroplastic (381 aa).

Residues 1–26 (MQVVGTVRVSGCGAVVAPSRRQCRVS) constitute a chloroplast transit peptide. Residues E120, E158, H161, E211, E244, and H247 each coordinate Fe cation.

The protein belongs to the fatty acid desaturase type 2 family. Homodimer. Fe(2+) is required as a cofactor.

The protein localises to the plastid. It localises to the chloroplast. It catalyses the reaction octadecanoyl-[ACP] + 2 reduced [2Fe-2S]-[ferredoxin] + O2 + 2 H(+) = (9Z)-octadecenoyl-[ACP] + 2 oxidized [2Fe-2S]-[ferredoxin] + 2 H2O. The protein operates within lipid metabolism; fatty acid metabolism. Converts stearoyl-ACP to oleoyl-ACP by introduction of a cis double bond between carbons 9 and 10 of the acyl chain. The polypeptide is Stearoyl-[acyl-carrier-protein] 9-desaturase 1, chloroplastic (Oryza sativa subsp. indica (Rice)).